Consider the following 222-residue polypeptide: Glutathione S-transferase alpha M14 (222 aa).

Methionine 1 bears the N-acetylmethionine mark. N-acetylalanine; in Glutathione S-transferase alpha M14, N-terminally processed is present on alanine 2. The GST N-terminal domain occupies 3-83 (GKPILHYFNG…YIATKYNLYG (81 aa)). Residue lysine 4 is modified to N6-succinyllysine. Glutathione-binding positions include tyrosine 9, 54-55 (QV), and 67-68 (QT). Residues 85 to 208 (DAKERALIDM…QPGSQRKPPM (124 aa)) form the GST C-terminal domain. The tract at residues 199–222 (QPGSQRKPPMDAKKIRRSQEYFPD) is disordered. The segment covering 206 to 222 (PPMDAKKIRRSQEYFPD) has biased composition (basic and acidic residues).

Belongs to the GST superfamily. Alpha family. As to quaternary structure, homodimer or heterodimer of GSTA1 and GSTA2.

Its subcellular location is the cytoplasm. It catalyses the reaction RX + glutathione = an S-substituted glutathione + a halide anion + H(+). It carries out the reaction prostaglandin A2 + glutathione = prostaglandin A2-S-(R)-glutathione. The enzyme catalyses prostaglandin J2 + glutathione = prostaglandin J2-S-(R)-glutathione. The catalysed reaction is (13S)-hydroperoxy-(9Z,11E)-octadecadienoate + 2 glutathione = (13S)-hydroxy-(9Z,11E)-octadecadienoate + glutathione disulfide + H2O. It catalyses the reaction androst-5-ene-3,17-dione = androst-4-ene-3,17-dione. Glutathione S-transferase that catalyzes the nucleophilic attack of the sulfur atom of glutathione on the electrophilic groups of a wide range of exogenous and endogenous compounds. Involved in the formation of glutathione conjugates of both prostaglandin A2 (PGA2) and prostaglandin J2 (PGJ2). It also catalyzes the isomerization of D5-androstene-3,17-dione (AD) into D4-androstene-3,17-dione and may therefore play an important role in hormone biosynthesis. Through its glutathione-dependent peroxidase activity toward the fatty acid hydroperoxide (13S)-hydroperoxy-(9Z,11E)-octadecadienoate/13-HPODE it is also involved in the metabolism of oxidized linoleic acid. The chain is Glutathione S-transferase alpha M14 from Sus scrofa (Pig).